The sequence spans 405 residues: Replication factor C large subunit (405 aa).

Position 47–54 (47–54 (GPPGVGKT)) interacts with ATP.

It belongs to the activator 1 small subunits family. RfcL subfamily. Heteropentamer composed of four small subunits (RfcS) and one large subunit (RfcL). Probably interacts with PCNA subunit PCNA3.

Part of the RFC clamp loader complex which loads the PCNA sliding clamp onto DNA. The complex possesses DNA-dependent ATPase activity. In Saccharolobus solfataricus (strain ATCC 35092 / DSM 1617 / JCM 11322 / P2) (Sulfolobus solfataricus), this protein is Replication factor C large subunit (rfcL).